Reading from the N-terminus, the 112-residue chain is Peptidyl-prolyl cis-trans isomerase (112 aa).

The disordered stretch occupies residues 1–22; that stretch reads MGVEKQVISSGNGQDFPKPGDR. The region spanning 20-108 is the PPIase FKBP-type domain; that stretch reads GDRITMHYTG…LFDVELLAIN (89 aa).

The protein belongs to the FKBP-type PPIase family. FKBP1 subfamily.

Its subcellular location is the cytoplasm. The protein localises to the nucleus. It carries out the reaction [protein]-peptidylproline (omega=180) = [protein]-peptidylproline (omega=0). Functionally, PPIases accelerate the folding of proteins. It catalyzes the cis-trans isomerization of proline imidic peptide bonds in oligopeptides. Has an important role in sexual development and serves as the target for rapamycin action. The sequence is that of Peptidyl-prolyl cis-trans isomerase (fkh1) from Schizosaccharomyces pombe (strain 972 / ATCC 24843) (Fission yeast).